We begin with the raw amino-acid sequence, 747 residues long: Fatty acid oxidation complex subunit alpha (747 aa).

Residues 1–197 (MGASATNSVT…KMGLVDDVVP (197 aa)) are enoyl-CoA hydratase. Positions 313-747 (RAIHRVGVLG…NIDEVTDVAS (435 aa)) are 3-hydroxyacyl-CoA dehydrogenase. Positions 590 to 614 (YLYSNPTKNSSPTKNGNSPAKRNSF) are disordered. Polar residues predominate over residues 593-610 (SNPTKNSSPTKNGNSPAK).

The protein in the N-terminal section; belongs to the enoyl-CoA hydratase/isomerase family. This sequence in the central section; belongs to the 3-hydroxyacyl-CoA dehydrogenase family. As to quaternary structure, heterotetramer of two alpha chains (FadJ) and two beta chains (FadI).

The protein resides in the cytoplasm. It carries out the reaction a (3S)-3-hydroxyacyl-CoA = a (2E)-enoyl-CoA + H2O. The enzyme catalyses a 4-saturated-(3S)-3-hydroxyacyl-CoA = a (3E)-enoyl-CoA + H2O. The catalysed reaction is a (3S)-3-hydroxyacyl-CoA + NAD(+) = a 3-oxoacyl-CoA + NADH + H(+). It catalyses the reaction (3S)-3-hydroxybutanoyl-CoA = (3R)-3-hydroxybutanoyl-CoA. Its pathway is lipid metabolism; fatty acid beta-oxidation. Catalyzes the formation of a hydroxyacyl-CoA by addition of water on enoyl-CoA. Also exhibits 3-hydroxyacyl-CoA epimerase and 3-hydroxyacyl-CoA dehydrogenase activities. In Yersinia pseudotuberculosis serotype O:1b (strain IP 31758), this protein is Fatty acid oxidation complex subunit alpha.